The chain runs to 89 residues: Small ribosomal subunit protein uS15 (89 aa).

The protein belongs to the universal ribosomal protein uS15 family. As to quaternary structure, part of the 30S ribosomal subunit. Forms a bridge to the 50S subunit in the 70S ribosome, contacting the 23S rRNA.

In terms of biological role, one of the primary rRNA binding proteins, it binds directly to 16S rRNA where it helps nucleate assembly of the platform of the 30S subunit by binding and bridging several RNA helices of the 16S rRNA. Forms an intersubunit bridge (bridge B4) with the 23S rRNA of the 50S subunit in the ribosome. This Coxiella burnetii (strain CbuK_Q154) (Coxiella burnetii (strain Q154)) protein is Small ribosomal subunit protein uS15.